An 883-amino-acid chain; its full sequence is MPILLFLLDTSASMNQRSHLGTTYLDIAKGAVETFMKLRSRDPASRGDRYMLVTLEELPYGIKAGWKENHATFMNELKNLQAVGLTTLGQSLRTAFDLLNLNRLVTGIDNYGQGRNPFFLEPSIIVAITDGSKLTTANGVQDELHLPLNSPLPGSELTKEPFRWDQRLFALVLRLPGATAVEQEQPTAVQFDESPITAMCDVTGGRSYSVTSQRILNQCLESLVQKIQSGVVINFEKSGPDPPILEDGLTDPVRSVGSQPWHSCHKLIYVRPNPKTGVPIGHWPIPESFWPDQNSPTLPPRTSHPVVKFSCTDSEPLVIDKLPFDKYELEPSPLTQFILERKSPHTCWPVFVPNSAKYCELGHPFGYLKASTALNCVNLFVLPYNYPVLLPLLDDLFKMHKNKPPLKWRQPFENYLKTMPPYYIGPLKKALRMMGTPNLMPDSMEYGLSYSVVSYLKKLSQQAKVESDRVIGSIGKKYPQETSIKVRSGSNALSLALRKDFKQLLQEITGEVPQRPMDLNMKEFAGFQIALLNKDIKPQTFRNAYDIPRTNLLDHLTRMRANLLKSTRQFLKGQDEDQAHSIPIVQMGNYQEYLKHIPSPLRELDYDQPRRLHTFGNPFKLDKKGMMIDEADEFVSGNQNKLKRTGEPNMQGVPKRRRCMSPLLHSRPQSPSVINNHISGKDSPVSVNQVLCDLPKPVAVHKNTDMSNNVAINEATENHVADHLCDDLLITKSESFGTLPNAALEASESYAAGGDSNFSPNDTSDVLLDKTRESGDTESCLLNNNTAFVHRKRRLHQCRSYEEANIELKAQILKEIRKPGRKYGIIFTLLKDVQGDLQTRLLFLQHVIKEATRFKKRMLIEQLEGFLEEIHRRTNQVNHLSSC.

Residues 3–227 (ILLFLLDTSA…QCLESLVQKI (225 aa)) enclose the VWFA domain. The Inhibitory loop signature appears at 626 to 633 (MMIDEADE).

This sequence belongs to the Integrator subunit 6 family. Component of the Integrator complex, composed of core subunits INTS1, INTS2, INTS3, INTS4, INTS5, INTS6, INTS7, INTS8, INTS9/RC74, INTS10, INTS11/CPSF3L, INTS12, INTS13, INTS14 and INTS15. The core complex associates with protein phosphatase 2A subunits PPP2CA and PPP2R1A, to form the Integrator-PP2A (INTAC) complex.

It localises to the nucleus. It is found in the chromosome. Component of the integrator complex, a multiprotein complex that terminates RNA polymerase II (Pol II) transcription in the promoter-proximal region of genes. The integrator complex provides a quality checkpoint during transcription elongation by driving premature transcription termination of transcripts that are unfavorably configured for transcriptional elongation: the complex terminates transcription by (1) catalyzing dephosphorylation of the C-terminal domain (CTD) of Pol II subunit POLR2A/RPB1 and SUPT5H/SPT5, (2) degrading the exiting nascent RNA transcript via endonuclease activity and (3) promoting the release of Pol II from bound DNA. The integrator complex is also involved in terminating the synthesis of non-coding Pol II transcripts, such as enhancer RNAs (eRNAs), small nuclear RNAs (snRNAs), telomerase RNAs and long non-coding RNAs (lncRNAs). Within the integrator complex, INTS6 acts as a molecular adapter that promotes assembly of protein phosphatase 2A (PP2A) subunits to the integrator core complex, promoting recruitment of PP2A to transcription pause-release checkpoint. The polypeptide is Integrator complex subunit 6-B (ints6-b) (Xenopus laevis (African clawed frog)).